A 1178-amino-acid polypeptide reads, in one-letter code: DNA-directed RNA polymerase subunit beta' (1178 aa).

Zn(2+) contacts are provided by Cys-60, Cys-62, Cys-75, and Cys-78. Mg(2+) is bound by residues Asp-450, Asp-452, and Asp-454. The Zn(2+) site is built by Cys-795, Cys-869, Cys-876, and Cys-879.

This sequence belongs to the RNA polymerase beta' chain family. In terms of assembly, the RNAP catalytic core consists of 2 alpha, 1 beta, 1 beta' and 1 omega subunit. When a sigma factor is associated with the core the holoenzyme is formed, which can initiate transcription. Mg(2+) is required as a cofactor. It depends on Zn(2+) as a cofactor.

It carries out the reaction RNA(n) + a ribonucleoside 5'-triphosphate = RNA(n+1) + diphosphate. Functionally, DNA-dependent RNA polymerase catalyzes the transcription of DNA into RNA using the four ribonucleoside triphosphates as substrates. The protein is DNA-directed RNA polymerase subunit beta' of Clostridium botulinum (strain Langeland / NCTC 10281 / Type F).